A 301-amino-acid polypeptide reads, in one-letter code: Hepatitis A virus cellular receptor 2 (301 aa).

A signal peptide spans 1–21 (MFSHLPFDCVLLLLLLLLTRS). Residues 22 to 124 (SEVEYRAEVG…PGIMNDEKFN (103 aa)) enclose the Ig-like V-type domain. Residues 22–202 (SEVEYRAEVG…RDSGATIRIG (181 aa)) lie on the Extracellular side of the membrane. 3 cysteine pairs are disulfide-bonded: C38–C110, C52–C63, and C58–C109. R111 lines the a 1,2-diacyl-sn-glycero-3-phospho-L-serine pocket. G116 is a Ca(2+) binding site. M118 contributes to the a 1,2-diacyl-sn-glycero-3-phospho-L-serine binding site. N119 is a binding site for Ca(2+). An O-linked (GalNAc...) threonine glycan is attached at T145. The N-linked (GlcNAc...) asparagine glycan is linked to N172. The helical transmembrane segment at 203 to 223 (IYIGAGICAGLALALIFGALI) threads the bilayer. The Cytoplasmic portion of the chain corresponds to 224-301 (FKWYSHSKEK…QPLGCRFAMP (78 aa)). A Phosphotyrosine; by ITK modification is found at Y265. A lipid anchor (S-palmitoyl cysteine) is attached at C296.

It belongs to the immunoglobulin superfamily. TIM family. Interacts with HMGB1; impairs HMGB1 binding to B-DNA and likely HMGB1-mediated innate immune response. Interacts with BAG6. Interacts (phosphorylated) with PIK3R1 and PIK3R2. Interacts (not dependent on its phosphorylation status) with FYN. Interacts (in basal state T-cells) with VAV1; AKT1/2, LCP2, ZAP70, SYK, PIK3R1, FYN, SH3BP2 and SH2D2A. Interacts (in activated T-cells) with LCK and PLCG. Interacts with ILF3; this interaction promotes ILF3 ubiquitination and degradation. O-glycosylated with core 1 or possibly core 8 glycans. In terms of processing, phosphorylated on tyrosine residues; modestly increased after TCR/CD28 stimulation. Can be phosphorylated in the cytoplasmic domain by FYN. Phosphorylation at Tyr-265 is increased by stimulation with ligand LGALS9. Post-translationally, palmitoylated by ZDHHC9 at Cys-296; palmitoylation stabilizes HAVCR2 by preventing binding to E3 ubiquitin ligase SYVN1, thereby suppressing its polyubiquitination and degradation. Ubiquitinated by SYVN1, leading to polyubiquitination and proteasomal degradation. As to expression, expressed in T-helper type 1 (Th1) lymphocytes. Expressed on regulatory T (Treg) cells after TCR stimulation. Expressed in dendritic cells and natural killer (NK) cells. Expressed in epithelial tissues. Expression is increased on CD4+ and CD8+ T-cells in chronic hepatitis C virus (HCV) infection. In progressive HIV-1 infection, expression is up-regulated on HIV-1-specific CD8 T-cells.

The protein localises to the cell membrane. It is found in the cell junction. Cell surface receptor implicated in modulating innate and adaptive immune responses. Generally accepted to have an inhibiting function. Reports on stimulating functions suggest that the activity may be influenced by the cellular context and/or the respective ligand. Regulates macrophage activation. Inhibits T-helper type 1 lymphocyte (Th1)-mediated auto- and alloimmune responses and promotes immunological tolerance. In CD8+ cells attenuates TCR-induced signaling, specifically by blocking NF-kappaB and NFAT promoter activities resulting in the loss of IL-2 secretion. The function may implicate its association with LCK proposed to impair phosphorylation of TCR subunits, and/or LGALS9-dependent recruitment of PTPRC to the immunological synapse. In contrast, shown to activate TCR-induced signaling in T-cells probably implicating ZAP70, LCP2, LCK and FYN. Expressed on Treg cells can inhibit Th17 cell responses. Receptor for LGALS9. Binding to LGALS9 is believed to result in suppression of T-cell responses; the resulting apoptosis of antigen-specific cells may implicate HAVCR2 phosphorylation and disruption of its association with BAG6. Binding to LGALS9 is proposed to be involved in innate immune response to intracellular pathogens. Expressed on Th1 cells interacts with LGALS9 expressed on Mycobacterium tuberculosis-infected macrophages to stimulate antibactericidal activity including IL-1 beta secretion and to restrict intracellular bacterial growth. However, the function as receptor for LGALS9 has been challenged. Also reported to enhance CD8+ T-cell responses to an acute infection such as by Listeria monocytogenes. Receptor for phosphatidylserine (PtSer); PtSer-binding is calcium-dependent. May recognize PtSer on apoptotic cells leading to their phagocytosis. Mediates the engulfment of apoptotic cells by dendritic cells. Expressed on T-cells, promotes conjugation but not engulfment of apoptotic cells. Expressed on dendritic cells (DCs) positively regulates innate immune response and in synergy with Toll-like receptors promotes secretion of TNF-alpha. In tumor-imfiltrating DCs suppresses nucleic acid-mediated innate immune repsonse by interaction with HMGB1 and interfering with nucleic acid-sensing and trafficking of nucleid acids to endosomes. Expressed on natural killer (NK) cells acts as a coreceptor to enhance IFN-gamma production in response to LGALS9. In contrast, shown to suppress NK cell-mediated cytotoxicity. Negatively regulates NK cell function in LPS-induced endotoxic shock. The polypeptide is Hepatitis A virus cellular receptor 2 (HAVCR2) (Homo sapiens (Human)).